Reading from the N-terminus, the 283-residue chain is 5'-nucleotidase SurE (283 aa).

Aspartate 14, aspartate 15, serine 47, and asparagine 105 together coordinate a divalent metal cation.

It belongs to the SurE nucleotidase family. Requires a divalent metal cation as cofactor.

Its subcellular location is the cytoplasm. The catalysed reaction is a ribonucleoside 5'-phosphate + H2O = a ribonucleoside + phosphate. Functionally, nucleotidase that shows phosphatase activity on nucleoside 5'-monophosphates. The polypeptide is 5'-nucleotidase SurE (Chlamydia trachomatis serovar D (strain ATCC VR-885 / DSM 19411 / UW-3/Cx)).